Consider the following 90-residue polypeptide: Large ribosomal subunit protein bL27 (90 aa).

The segment at 1-22 (MAHKKSGGSSSNGRDSAGRRLG) is disordered.

It belongs to the bacterial ribosomal protein bL27 family.

This Caulobacter sp. (strain K31) protein is Large ribosomal subunit protein bL27.